We begin with the raw amino-acid sequence, 395 residues long: Multidrug resistance protein MdtL (395 aa).

Helical transmembrane passes span 4-24 (FLLC…MYLV), 42-62 (IAFS…GKIA), 69-89 (PVAI…SRAS), 93-113 (LFLS…VVAF), 131-151 (LLNG…HLIM), 158-178 (SLFY…LFIL), 217-237 (VSVI…VMGF), 247-267 (ALTA…LGLF), 271-291 (TLML…SLAH), 295-315 (VTLF…GVAM), 328-350 (VASS…LAAI), and 355-377 (AMNM…IFSV).

This sequence belongs to the major facilitator superfamily. DHA1 family. MdtL (TC 2.A.1.2.22) subfamily.

The protein localises to the cell inner membrane. This is Multidrug resistance protein MdtL from Salmonella dublin (strain CT_02021853).